The following is a 144-amino-acid chain: Large ribosomal subunit protein uL16 (144 aa).

The protein belongs to the universal ribosomal protein uL16 family. Part of the 50S ribosomal subunit.

Binds 23S rRNA and is also seen to make contacts with the A and possibly P site tRNAs. The protein is Large ribosomal subunit protein uL16 of Listeria innocua serovar 6a (strain ATCC BAA-680 / CLIP 11262).